The chain runs to 598 residues: Nuclear receptor subfamily 4 group A member 1 (598 aa).

Disordered stretches follow at residues 1–50 and 120–159; these read MPCI…PTAL and LDET…GSFG. Composition is skewed to low complexity over residues 37–50 and 134–145; these read LASP…PTAL and SPCSAPSPSTPS. A required for nuclear import region spans residues 171-466; the sequence is RAWTEQLPKA…PAEGKLIFCS (296 aa). Residues 264-339 constitute a DNA-binding region (nuclear receptor); the sequence is EGRCAVCGDN…VGMVKEVVRT (76 aa). NR C4-type zinc fingers lie at residues 267–287 and 303–327; these read CAVC…CEGC and CLAN…FQKC. Residues 268-354 form a required for binding NBRE-containing DNA region; sequence AVCGDNASCQ…RRGRLPSKPK (87 aa). Residues 299 to 361 form a required for the interaction with RXRA region; that stretch reads AKYICLANKD…KPKQPPDASP (63 aa). S341 carries the phosphoserine; by PKA modification. Residues 341–361 are disordered; that stretch reads SLKGRRGRLPSKPKQPPDASP. A Phosphoserine; by PKA, RPS6KA1 and RPS6KA3 modification is found at S351. The NR LBD domain occupies 360-595; the sequence is SPANLLTSLV…PIVDKIFMDT (236 aa). Residues 521 to 544 form a binds lipopolysaccharide region; it reads PRRVEELQNRIASCLKEHVSAVAG. The segment at 584-595 is AF-2; sequence PPPIVDKIFMDT.

This sequence belongs to the nuclear hormone receptor family. NR4 subfamily. As to quaternary structure, binds the NGFI-B response element (NBRE) as a monomer. Binds the Nur response element (NurRE), consisting of two inverse NBRE-related octanucleotide repeats separated by 6 base-pairs, as a dimer. Interacts (via N-terminus) with NLRP3 (via LRR repeat domain); the interaction is direct, requires binding of NR4A1/Nur77 to NBRE-containing dsDNA and lipopolysaccharide, and leads to non-canonical NLRP3 inflammasome activation. Interacts with GADD45GIP1. Interacts with STK11. Heterodimer (via DNA-binding domain) with RXRA (via C-terminus); DNA-binding of the heterodimer is enhanced by 9-cis retinoic acid. Competes for the RXRA interaction with EP300 and thereby attenuates EP300 mediated acetylation of RXRA. Interacts with NCOA1. Interacts with NCOA2. Interacts with NCOA3. The cofactor is Zn(2+). Post-translationally, phosphorylated at Ser-351 by RPS6KA1 and RPS6KA3 in response to mitogenic or stress stimuli. In terms of processing, acetylated by p300/CBP, acetylation increases stability. Deacetylated by HDAC1.

It localises to the cytoplasm. Its subcellular location is the cytosol. It is found in the nucleus. The protein localises to the mitochondrion. Functionally, orphan nuclear receptor. Binds the NGFI-B response element (NBRE) 5'-AAAGGTCA-3'. Binds 9-cis-retinoic acid outside of its ligand-binding (NR LBD) domain. Participates in energy homeostasis by sequestrating the kinase STK11 in the nucleus, thereby attenuating cytoplasmic AMPK activation. Regulates the inflammatory response in macrophages by regulating metabolic adaptations during inflammation, including repressing the transcription of genes involved in the citric acid cycle (TCA). Inhibits NF-kappa-B signaling by binding to low-affinity NF-kappa-B binding sites, such as at the IL2 promoter. May act concomitantly with NR4A2 in regulating the expression of delayed-early genes during liver regeneration. Plays a role in the vascular response to injury. Its function is as follows. In the cytosol, upon its detection of both bacterial lipopolysaccharide (LPS) and NBRE-containing mitochondrial DNA released by GSDMD pores during pyroptosis, it promotes non-canonical NLRP3 inflammasome activation by stimulating association of NLRP3 and NEK7. The chain is Nuclear receptor subfamily 4 group A member 1 (NR4A1) from Canis lupus familiaris (Dog).